The primary structure comprises 238 residues: Small ribosomal subunit protein uS2 (238 aa).

This sequence belongs to the universal ribosomal protein uS2 family.

The protein is Small ribosomal subunit protein uS2 of Actinobacillus pleuropneumoniae serotype 5b (strain L20).